Here is a 456-residue protein sequence, read N- to C-terminus: Gamma-aminobutyric acid receptor subunit alpha-1 (456 aa).

Positions 1–27 are cleaved as a signal peptide; it reads MKKSPGLSDYLWAWTLFLSTLTGRSYG. Topologically, residues 28–253 are extracellular; it reads QPSLQDELKD…FHLKRKIGYF (226 aa). A glycan (N-linked (GlcNAc...) asparagine) is linked at Asn-38. A 4-aminobutanoate-binding site is contributed by Arg-94. Residue Asn-138 is glycosylated (N-linked (GlcNAc...) asparagine). Thr-157 is a binding site for 4-aminobutanoate. The cysteines at positions 166 and 180 are disulfide-linked. The chain crosses the membrane as a helical span at residues 254-274; the sequence is VIQTYLPCIMTVILSQVSFWL. Residues 275–279 lie on the Cytoplasmic side of the membrane; sequence NRESV. The helical transmembrane segment at 280 to 301 threads the bilayer; sequence PARTVFGVTTVLTMTTLSISAR. At 302 to 311 the chain is on the extracellular side; it reads NSLPKVAYAT. The chain crosses the membrane as a helical span at residues 312-333; that stretch reads AMDWFIAVCYAFVFSALIEFAT. At 334–421 the chain is on the cytoplasmic side; it reads VNYFTKRGYA…TFNSVSKIDR (88 aa). A helical membrane pass occupies residues 422 to 441; the sequence is LSRIAFPLLFGIFNLVYWAT. The Extracellular portion of the chain corresponds to 442–456; the sequence is YLNREPQLKAPTPHQ.

The protein belongs to the ligand-gated ion channel (TC 1.A.9) family. Gamma-aminobutyric acid receptor (TC 1.A.9.5) subfamily. GABRA1 sub-subfamily. In terms of assembly, heteropentamer, formed by a combination of alpha (GABRA1-6), beta (GABRB1-3), gamma (GABRG1-3), delta (GABRD), epsilon (GABRE), rho (GABRR1-3), pi (GABRP) and theta (GABRQ) subunits, each subunit exhibiting distinct physiological and pharmacological properties. Interacts with UBQLN1. Interacts with TRAK1. Interacts with KIF21B. Identified in a complex of 720 kDa composed of LHFPL4, NLGN2, GABRA1, GABRB2, GABRG2 and GABRB3. Interacts with LHFPL4. Interacts with NLGN2. Interacts with SHISA7; interaction leads to the regulation of GABA(A) receptor trafficking, channel deactivation kinetics and pharmacology. In terms of tissue distribution, cerebellar granule cells, Purkinje cells and stellate/basket cells.

Its subcellular location is the postsynaptic cell membrane. The protein resides in the cell membrane. It is found in the cytoplasmic vesicle membrane. The enzyme catalyses chloride(in) = chloride(out). Its activity is regulated as follows. Allosterically activated by benzodiazepines, the neuroanesthetic alphaxalone and pentobarbital. Inhibited by the antagonist bicuculline. Potentiated by histamine. Alpha subunit of the heteropentameric ligand-gated chloride channel gated by gamma-aminobutyric acid (GABA), a major inhibitory neurotransmitter in the brain. GABA-gated chloride channels, also named GABA(A) receptors (GABAAR), consist of five subunits arranged around a central pore and contain GABA active binding site(s) located at the alpha and beta subunit interface(s). When activated by GABA, GABAARs selectively allow the flow of chloride anions across the cell membrane down their electrochemical gradient. Alpha-1/GABRA1-containing GABAARs are largely synaptic. Chloride influx into the postsynaptic neuron following GABAAR opening decreases the neuron ability to generate a new action potential, thereby reducing nerve transmission. GABAARs containing alpha-1 and beta-2 or -3 subunits exhibit synaptogenic activity; the gamma-2 subunit being necessary but not sufficient to induce rapid synaptic contacts formation. GABAARs function also as histamine receptor where histamine binds at the interface of two neighboring beta subunits and potentiates GABA response. GABAARs containing alpha, beta and epsilon subunits also permit spontaneous chloride channel activity while preserving the structural information required for GABA-gated openings. Alpha-1-mediated plasticity in the orbitofrontal cortex regulates context-dependent action selection. Together with rho subunits, may also control neuronal and glial GABAergic transmission in the cerebellum. The sequence is that of Gamma-aminobutyric acid receptor subunit alpha-1 (GABRA1) from Bos taurus (Bovine).